We begin with the raw amino-acid sequence, 447 residues long: 3-O-methyltransferase 2 (447 aa).

Residues 264-265, Asp287, 318-319, and Arg334 each bind S-adenosyl-L-methionine; these read GG and DF. Catalysis depends on His338, which acts as the Proton acceptor.

The protein belongs to the class I-like SAM-binding methyltransferase superfamily. Cation-independent O-methyltransferase family. COMT subfamily.

In terms of biological role, S-adenosyl-L-methionine-dependent methyltransferase that preferentially catalyzes the methylation of 3-OH phenolic compounds like isovanillic acid and 3-OH-4-Met cinnamic acid. May play a role in promoting lignin degradation by methylating and inactivating free-hydroxyl phenolic compounds, products of lignin cleavage which are known inhibitors of lignin peroxidases. The chain is 3-O-methyltransferase 2 from Phanerochaete chrysosporium (strain RP-78 / ATCC MYA-4764 / FGSC 9002) (White-rot fungus).